The following is a 94-amino-acid chain: Large ribosomal subunit protein bL27 (94 aa).

The propeptide occupies 1-9; it reads MLKLNLQFF.

Belongs to the bacterial ribosomal protein bL27 family. The N-terminus is cleaved by ribosomal processing cysteine protease Prp.

In Staphylococcus haemolyticus (strain JCSC1435), this protein is Large ribosomal subunit protein bL27.